Here is a 410-residue protein sequence, read N- to C-terminus: MNDEDYSTIYDTIQNERTYEVPDQPEENESPHYDDVHEYLRPENDLYATQLNTHEYDFVSVYTIKGEETSLASVQSEDRGYLLPDEIYSELQEAHPGEPQEDRGISMEGLYSSTQDQQLCAAELQENGSVMKEDLPSPSSFTIQHSKAFSTTKYSCYSDAEGLEEKEGAHMNPEIYLFVKAGIDGESIGNCPFSQRLFMILWLKGVVFNVTTVDLKRKPADLHNLAPGTHPPFLTFNGDVKTDVNKIEEFLEETLTPEKYPKLAAKHRESNTAGIDIFSKFSAYIKNTKQQNNAALERGLTKALKKLDDYLNTPLPEEIDANTCGEDKGSRRKFLDGDELTLADCNLLPKLHVVKIVAKKYRNYDIPAEMTGLWRYLKNAYARDEFTNTCAADSEIELAYADVAKRLSRS.

The short motif at 191–194 (CPFS) is the G-site element. Residues 193 to 213 (FSQRLFMILWLKGVVFNVTTV) form a helical membrane-spanning segment. Residues 260 to 400 (YPKLAAKHRE…AADSEIELAY (141 aa)) enclose the GST C-terminal domain.

It belongs to the chloride channel CLIC family. As to quaternary structure, component of a multimeric complex consisting of several cytoskeletal proteins, including actin, ezrin, alpha-actinin, gelsolin, and IQGAP1. Interacts with AKAP9. Interacts with TPRN. TPRN, CLIC5 and PTPQR form concentric rings at the base of stereocilia and may form a complex. Interacts with EZR, MYO6 and RDX; the proteins may work together as a complex to stabilize linkages between the plasma membrane and subjacent actin cytoskeleton at the stereocilium base. In terms of tissue distribution, widely expressed in both fetal and adult human tissues. Isoform 1 is expressed in renal glomeruli endothelial cells and podocytes (at protein level).

It is found in the cytoplasm. The protein localises to the cytoskeleton. Its subcellular location is the cell cortex. The protein resides in the membrane. It localises to the apical cell membrane. It is found in the mitochondrion. The protein localises to the cell projection. Its subcellular location is the stereocilium. The protein resides in the golgi apparatus. It localises to the microtubule organizing center. It is found in the centrosome. It carries out the reaction chloride(in) = chloride(out). The catalysed reaction is Na(+)(in) = Na(+)(out). It catalyses the reaction K(+)(in) = K(+)(out). Inhibited by F-actin. In the soluble state, catalyzes glutaredoxin-like thiol disulfide exchange reactions with reduced glutathione as electron donor. Can insert into membranes and form non-selective ion channels almost equally permeable to Na(+), K(+) and Cl(-). Required for normal hearing. It is necessary for the formation of stereocilia in the inner ear and normal development of the organ of Corti. May play a role in the regulation of transepithelial ion absorption and secretion. Is required for the development and/or maintenance of the proper glomerular endothelial cell and podocyte architecture. Plays a role in formation of the lens suture in the eye, which is important for normal optical properties of the lens. The chain is Chloride intracellular channel protein 5 from Homo sapiens (Human).